Here is a 217-residue protein sequence, read N- to C-terminus: Large ribosomal subunit protein uL1 (217 aa).

Ser-2 is modified (N-acetylserine). Tyr-11 is modified (phosphotyrosine). 2 positions are modified to N6-acetyllysine: Lys-91 and Lys-106. The residue at position 118 (Lys-118) is an N6-acetyllysine; alternate. Lys-118 participates in a covalent cross-link: Glycyl lysine isopeptide (Lys-Gly) (interchain with G-Cter in SUMO1); alternate. Lys-118 is covalently cross-linked (Glycyl lysine isopeptide (Lys-Gly) (interchain with G-Cter in SUMO2); alternate).

The protein belongs to the universal ribosomal protein uL1 family. As to quaternary structure, component of the large ribosomal subunit.

It is found in the cytoplasm. Component of the large ribosomal subunit. The ribosome is a large ribonucleoprotein complex responsible for the synthesis of proteins in the cell. The protein is Large ribosomal subunit protein uL1 (RPL10A) of Macaca fascicularis (Crab-eating macaque).